We begin with the raw amino-acid sequence, 207 residues long: Guanylate kinase (207 aa).

The region spanning 6–185 (GLLIVLSGPS…AKNRIQCIVE (180 aa)) is the Guanylate kinase-like domain. 13 to 20 (GPSGVGKG) is an ATP binding site.

Belongs to the guanylate kinase family.

Its subcellular location is the cytoplasm. The enzyme catalyses GMP + ATP = GDP + ADP. Functionally, essential for recycling GMP and indirectly, cGMP. The polypeptide is Guanylate kinase (Staphylococcus aureus (strain bovine RF122 / ET3-1)).